Here is a 566-residue protein sequence, read N- to C-terminus: Proline--tRNA ligase (566 aa).

It belongs to the class-II aminoacyl-tRNA synthetase family. ProS type 1 subfamily. In terms of assembly, homodimer.

Its subcellular location is the cytoplasm. It catalyses the reaction tRNA(Pro) + L-proline + ATP = L-prolyl-tRNA(Pro) + AMP + diphosphate. Catalyzes the attachment of proline to tRNA(Pro) in a two-step reaction: proline is first activated by ATP to form Pro-AMP and then transferred to the acceptor end of tRNA(Pro). As ProRS can inadvertently accommodate and process non-cognate amino acids such as alanine and cysteine, to avoid such errors it has two additional distinct editing activities against alanine. One activity is designated as 'pretransfer' editing and involves the tRNA(Pro)-independent hydrolysis of activated Ala-AMP. The other activity is designated 'posttransfer' editing and involves deacylation of mischarged Ala-tRNA(Pro). The misacylated Cys-tRNA(Pro) is not edited by ProRS. The polypeptide is Proline--tRNA ligase (Bacillus anthracis (strain A0248)).